A 183-amino-acid polypeptide reads, in one-letter code: Calcium-binding protein M (183 aa).

A lipid anchor (N-myristoyl glycine) is attached at G2. EF-hand domains are found at residues 25–60 (EEVA…KLPN), 61–96 (YPED…IGKG), 97–132 (SAED…MKNV), and 142–177 (DIEL…SPSL). Ca(2+)-binding residues include D74, D76, S78, T80, E85, D110, D112, S114, E121, D155, D157, N159, and E166.

It belongs to the recoverin family.

The sequence is that of Calcium-binding protein M (cbpM) from Dictyostelium discoideum (Social amoeba).